We begin with the raw amino-acid sequence, 360 residues long: Dual-specificity RNA methyltransferase RlmN (360 aa).

E89 acts as the Proton acceptor in catalysis. In terms of domain architecture, Radical SAM core spans 95-330 (DSGRGTLCVS…TRVTRGQDID (236 aa)). C102 and C333 are disulfide-bonded. [4Fe-4S] cluster is bound by residues C109, C113, and C116. S-adenosyl-L-methionine-binding positions include 159 to 160 (GE), S191, 213 to 215 (SLH), and N290. C333 acts as the S-methylcysteine intermediate in catalysis.

The protein belongs to the radical SAM superfamily. RlmN family. It depends on [4Fe-4S] cluster as a cofactor.

Its subcellular location is the cytoplasm. It carries out the reaction adenosine(2503) in 23S rRNA + 2 reduced [2Fe-2S]-[ferredoxin] + 2 S-adenosyl-L-methionine = 2-methyladenosine(2503) in 23S rRNA + 5'-deoxyadenosine + L-methionine + 2 oxidized [2Fe-2S]-[ferredoxin] + S-adenosyl-L-homocysteine. The catalysed reaction is adenosine(37) in tRNA + 2 reduced [2Fe-2S]-[ferredoxin] + 2 S-adenosyl-L-methionine = 2-methyladenosine(37) in tRNA + 5'-deoxyadenosine + L-methionine + 2 oxidized [2Fe-2S]-[ferredoxin] + S-adenosyl-L-homocysteine. Functionally, specifically methylates position 2 of adenine 2503 in 23S rRNA and position 2 of adenine 37 in tRNAs. m2A2503 modification seems to play a crucial role in the proofreading step occurring at the peptidyl transferase center and thus would serve to optimize ribosomal fidelity. In Alkalilimnicola ehrlichii (strain ATCC BAA-1101 / DSM 17681 / MLHE-1), this protein is Dual-specificity RNA methyltransferase RlmN.